The sequence spans 141 residues: Lutropin subunit beta (141 aa).

Positions 1 to 21 (MERYQELTVLLLLLLLEGGSG) are cleaved as a signal peptide. Cystine bridges form between C30-C78, C44-C93, C47-C131, C55-C109, C59-C111, and C114-C121. N34 is a glycosylation site (N-linked (GlcNAc...) asparagine).

It belongs to the glycoprotein hormones subunit beta family. In terms of assembly, heterodimer of a common alpha chain and a unique beta chain which confers biological specificity to thyrotropin, lutropin, follitropin and gonadotropin.

The protein localises to the secreted. Promotes spermatogenesis and ovulation by stimulating the testes and ovaries to synthesize steroids. The protein is Lutropin subunit beta (LHB) of Monodelphis domestica (Gray short-tailed opossum).